We begin with the raw amino-acid sequence, 343 residues long: uncharacterized protein (343 aa).

This is an uncharacterized protein from Nostoc sp. (strain PCC 7120 / SAG 25.82 / UTEX 2576).